The primary structure comprises 219 residues: MTERRLSPLDKLLARADNALRTLTPGTTQAERTPAHAAPAPDAPEAGTLPSDQRRHVLGLMRINHTGEVCAQALYQGQASTASLPHIRHAMEESAREEEDHLAWCEERIQELGGVPSKLNPLFYAMSYAVGATAGLIGDRWSLGFVTETENQVVKHLESHLYQVPESDLRTRAILEQMKTDELKHAVTAKDAGGADLPSPVRHAMTLMSKVMTFTTYRI.

Positions 21–51 (RTLTPGTTQAERTPAHAAPAPDAPEAGTLPS) are disordered. Residues 35 to 46 (AHAAPAPDAPEA) are compositionally biased toward low complexity. The Fe cation site is built by E68, E98, H101, E150, E182, and H185.

This sequence belongs to the COQ7 family. It depends on Fe cation as a cofactor.

The protein resides in the cell membrane. The enzyme catalyses a 5-methoxy-2-methyl-3-(all-trans-polyprenyl)benzene-1,4-diol + AH2 + O2 = a 3-demethylubiquinol + A + H2O. It participates in cofactor biosynthesis; ubiquinone biosynthesis. Catalyzes the hydroxylation of 2-nonaprenyl-3-methyl-6-methoxy-1,4-benzoquinol during ubiquinone biosynthesis. This is 3-demethoxyubiquinol 3-hydroxylase from Alcanivorax borkumensis (strain ATCC 700651 / DSM 11573 / NCIMB 13689 / SK2).